Consider the following 361-residue polypeptide: Phosphoserine aminotransferase (361 aa).

An L-glutamate-binding site is contributed by R42. Pyridoxal 5'-phosphate-binding positions include 76–77 (AR), W102, T153, D173, and Q196. The residue at position 197 (K197) is an N6-(pyridoxal phosphate)lysine. A pyridoxal 5'-phosphate-binding site is contributed by 238–239 (NT).

Belongs to the class-V pyridoxal-phosphate-dependent aminotransferase family. SerC subfamily. In terms of assembly, homodimer. The cofactor is pyridoxal 5'-phosphate.

It localises to the cytoplasm. The enzyme catalyses O-phospho-L-serine + 2-oxoglutarate = 3-phosphooxypyruvate + L-glutamate. It catalyses the reaction 4-(phosphooxy)-L-threonine + 2-oxoglutarate = (R)-3-hydroxy-2-oxo-4-phosphooxybutanoate + L-glutamate. It functions in the pathway amino-acid biosynthesis; L-serine biosynthesis; L-serine from 3-phospho-D-glycerate: step 2/3. The protein operates within cofactor biosynthesis; pyridoxine 5'-phosphate biosynthesis; pyridoxine 5'-phosphate from D-erythrose 4-phosphate: step 3/5. In terms of biological role, catalyzes the reversible conversion of 3-phosphohydroxypyruvate to phosphoserine and of 3-hydroxy-2-oxo-4-phosphonooxybutanoate to phosphohydroxythreonine. The protein is Phosphoserine aminotransferase of Yersinia pestis (strain Pestoides F).